We begin with the raw amino-acid sequence, 103 residues long: Large ribosomal subunit protein bL21 (103 aa).

It belongs to the bacterial ribosomal protein bL21 family. Part of the 50S ribosomal subunit. Contacts protein L20.

Functionally, this protein binds to 23S rRNA in the presence of protein L20. The chain is Large ribosomal subunit protein bL21 from Saccharophagus degradans (strain 2-40 / ATCC 43961 / DSM 17024).